Consider the following 504-residue polypeptide: MDRHEHFKAPANEDELDDIDDDMVVGVIAEIEQEVLNESESDDDEYDLVDMGAPEPQQADGHSSSNESISSDGSFDPNAEDSDSDDSMIDEAASGGASSAKRRKEQTATDGVGASGSGASGGADYSHLDDDDETDETVRAIIAAIKKPRSAPPEIKLEDFITDICFHPDRDIIALATIIGDVHLYEYGNEENKLLRTIEVHAKACRDVEFTEDGRSLITCSKDKCVMVTDMETEKLKKLYETAHDDAINKLHVLDERLFATGDDAGTVKLWDFRTKDAIFELKEVEDQITQMLTNEQNKLLLATSADGYLTTYNIGARKLYVQSEPYEEELNCMGIYRGSSKLVAGTSKGRLYTYNWGYFGYHCDMYPGIKSPISLMIPITDRIACVAGEDGNIRACHIAPYRNLGVVGQHNMPIESLDINCSGELLASSSHNNDVRFWNVKYFEDFGDIKYNEKHNAYKEKRHNLPSSKCTNASDFFADMTKDQDDDDNDGGNDTAAGPSNVT.

Disordered stretches follow at residues 1–21 (MDRHEHFKAPANEDELDDIDD) and 33–132 (QEVL…DDDD). Acidic residues-rich tracts occupy residues 12–21 (NEDELDDIDD) and 33–48 (QEVLNESESDDDEYDL). Residues 63–74 (SSSNESISSDGS) are compositionally biased toward low complexity. Residues 78-89 (NAEDSDSDDSMI) are compositionally biased toward acidic residues. WD repeat units follow at residues 156–195 (KLEDFITDICFHPDRDIIALATIIGDVHLYEYGNEENKLL), 200–239 (VHAKACRDVEFTEDGRSLITCSKDKCVMVTDMETEKLKKL), 243–281 (AHDDAINKLHVLDERLFATGDDAGTVKLWDFRTKDAIFE), 284–323 (EVEDQITQMLTNEQNKLLLATSADGYLTTYNIGARKLYVQ), 326–365 (PYEEELNCMGIYRGSSKLVAGTSKGRLYTYNWGYFGYHCD), and 410–449 (QHNMPIESLDINCSGELLASSSHNNDVRFWNVKYFEDFGD). A disordered region spans residues 477 to 504 (FFADMTKDQDDDDNDGGNDTAAGPSNVT).

This sequence belongs to the WD repeat WDR55 family.

This is WD repeat-containing protein 55 homolog from Drosophila virilis (Fruit fly).